We begin with the raw amino-acid sequence, 364 residues long: DNA polymerase IV (364 aa).

One can recognise a UmuC domain in the interval Ile-14–Gly-198. Mg(2+) contacts are provided by Asp-18 and Asp-116. Residue Glu-117 is part of the active site.

The protein belongs to the DNA polymerase type-Y family. In terms of assembly, monomer. It depends on Mg(2+) as a cofactor.

Its subcellular location is the cytoplasm. It carries out the reaction DNA(n) + a 2'-deoxyribonucleoside 5'-triphosphate = DNA(n+1) + diphosphate. Functionally, poorly processive, error-prone DNA polymerase involved in untargeted mutagenesis. Copies undamaged DNA at stalled replication forks, which arise in vivo from mismatched or misaligned primer ends. These misaligned primers can be extended by PolIV. Exhibits no 3'-5' exonuclease (proofreading) activity. May be involved in translesional synthesis, in conjunction with the beta clamp from PolIII. The sequence is that of DNA polymerase IV from Streptococcus pyogenes serotype M12 (strain MGAS2096).